A 607-amino-acid polypeptide reads, in one-letter code: Pyruvate decarboxylase 2 (607 aa).

The tract at residues methionine 1–proline 22 is disordered. Substrate contacts are provided by aspartate 69 and histidine 156. The tract at residues aspartate 434–isoleucine 516 is thiamine pyrophosphate binding. Positions 484, 511, and 513 each coordinate Mg(2+). A substrate-binding site is contributed by glutamate 517.

The protein belongs to the TPP enzyme family. In terms of assembly, homotetramer. It depends on a metal cation as a cofactor. The cofactor is thiamine diphosphate. In terms of tissue distribution, expressed at low levels in roots, shoots, flowers, siliques and seeds.

The catalysed reaction is a 2-oxocarboxylate + H(+) = an aldehyde + CO2. The protein is Pyruvate decarboxylase 2 (PDC2) of Arabidopsis thaliana (Mouse-ear cress).